Consider the following 444-residue polypeptide: Jacalin-related lectin 11 (444 aa).

Position 2 is an N-acetylalanine (A2). 3 consecutive Jacalin-type lectin domains span residues 2 to 143 (ALKV…YFIK), 146 to 290 (SIQS…YYAP), and 298 to 442 (PEKL…HVTA).

The protein belongs to the jacalin lectin family.

This chain is Jacalin-related lectin 11 (JAL11), found in Arabidopsis thaliana (Mouse-ear cress).